Consider the following 29-residue polypeptide: Cytochrome b6-f complex subunit 8 (29 aa).

The helical transmembrane segment at 3–23 threads the bilayer; sequence IVSIAWAALMVVFTFSLSLVV.

The protein belongs to the PetN family. In terms of assembly, the 4 large subunits of the cytochrome b6-f complex are cytochrome b6, subunit IV (17 kDa polypeptide, PetD), cytochrome f and the Rieske protein, while the 4 small subunits are PetG, PetL, PetM and PetN. The complex functions as a dimer.

It is found in the plastid. The protein resides in the chloroplast thylakoid membrane. In terms of biological role, component of the cytochrome b6-f complex, which mediates electron transfer between photosystem II (PSII) and photosystem I (PSI), cyclic electron flow around PSI, and state transitions. The polypeptide is Cytochrome b6-f complex subunit 8 (Angiopteris evecta (Mule's foot fern)).